The chain runs to 307 residues: Voltage-dependent anion channel-forming protein sll1024 (307 aa).

The next 4 helical transmembrane spans lie at 26–46 (VIPA…GVTL), 54–74 (FSIP…LLVF), 226–246 (LIFL…HWAT), and 247–267 (AFVV…GVEI).

This sequence belongs to the anion channel-forming bestrophin (TC 1.A.46) family.

The protein localises to the cell membrane. The polypeptide is Voltage-dependent anion channel-forming protein sll1024 (Synechocystis sp. (strain ATCC 27184 / PCC 6803 / Kazusa)).